The chain runs to 556 residues: Dihydroxy-acid dehydratase (556 aa).

Asp78 provides a ligand contact to Mg(2+). Cys119 is a [2Fe-2S] cluster binding site. The Mg(2+) site is built by Asp120 and Lys121. The residue at position 121 (Lys121) is an N6-carboxylysine. Cys195 is a binding site for [2Fe-2S] cluster. Residue Glu446 participates in Mg(2+) binding. Catalysis depends on Ser472, which acts as the Proton acceptor.

It belongs to the IlvD/Edd family. As to quaternary structure, homodimer. It depends on [2Fe-2S] cluster as a cofactor. Requires Mg(2+) as cofactor.

It carries out the reaction (2R)-2,3-dihydroxy-3-methylbutanoate = 3-methyl-2-oxobutanoate + H2O. It catalyses the reaction (2R,3R)-2,3-dihydroxy-3-methylpentanoate = (S)-3-methyl-2-oxopentanoate + H2O. Its pathway is amino-acid biosynthesis; L-isoleucine biosynthesis; L-isoleucine from 2-oxobutanoate: step 3/4. It functions in the pathway amino-acid biosynthesis; L-valine biosynthesis; L-valine from pyruvate: step 3/4. Its function is as follows. Functions in the biosynthesis of branched-chain amino acids. Catalyzes the dehydration of (2R,3R)-2,3-dihydroxy-3-methylpentanoate (2,3-dihydroxy-3-methylvalerate) into 2-oxo-3-methylpentanoate (2-oxo-3-methylvalerate) and of (2R)-2,3-dihydroxy-3-methylbutanoate (2,3-dihydroxyisovalerate) into 2-oxo-3-methylbutanoate (2-oxoisovalerate), the penultimate precursor to L-isoleucine and L-valine, respectively. This chain is Dihydroxy-acid dehydratase, found in Desulfatibacillum aliphaticivorans.